The chain runs to 354 residues: Glutamine synthetase (354 aa).

The GS beta-grasp domain maps to 22 to 101 (VQAEYVWIDG…VLAETFNNDG (80 aa)). Residues 108 to 354 (HRHHTKKVMD…IIVETTVLDK (247 aa)) enclose the GS catalytic domain.

The protein belongs to the glutamine synthetase family. In terms of assembly, homooctamer.

Its subcellular location is the cytoplasm. The catalysed reaction is L-glutamate + NH4(+) + ATP = L-glutamine + ADP + phosphate + H(+). The sequence is that of Glutamine synthetase (GLNA) from Suillus bovinus (Jersey cow bolete).